A 309-amino-acid chain; its full sequence is D-alanine--D-alanine ligase (309 aa).

One can recognise an ATP-grasp domain in the interval 104–306 (KLLWQSFNLP…YQILVQKILE (203 aa)). 137 to 192 (ISLLGLPIIVKPNQEGSSIGITIVYSYETLYKACKTAFIFDNSILIEKFIYGEEYT) contacts ATP. Mg(2+) contacts are provided by aspartate 260, glutamate 273, and asparagine 275.

It belongs to the D-alanine--D-alanine ligase family. Mg(2+) is required as a cofactor. The cofactor is Mn(2+).

The protein localises to the cytoplasm. It carries out the reaction 2 D-alanine + ATP = D-alanyl-D-alanine + ADP + phosphate + H(+). It functions in the pathway cell wall biogenesis; peptidoglycan biosynthesis. Functionally, cell wall formation. In Buchnera aphidicola subsp. Baizongia pistaciae (strain Bp), this protein is D-alanine--D-alanine ligase.